A 247-amino-acid chain; its full sequence is ABC-type transporter ATP-binding protein EcsA (247 aa).

Residues L4–D234 form the ABC transporter domain. Residue G36–S43 participates in ATP binding.

It belongs to the ABC transporter superfamily.

Has a role in exoprotein production, sporulation and competence. This is ABC-type transporter ATP-binding protein EcsA (ecsA) from Bacillus subtilis (strain 168).